Reading from the N-terminus, the 174-residue chain is uncharacterized protein (174 aa).

Helical transmembrane passes span 8–28 (FLFIVVFLFHGFMFSVVNYVF) and 146–166 (IVSWILYVFLLATLFLSIQFI).

It localises to the cell membrane. This is an uncharacterized protein from Haemophilus influenzae (strain ATCC 51907 / DSM 11121 / KW20 / Rd).